The following is a 344-amino-acid chain: Peroxidase 36 (344 aa).

The first 28 residues, 1-28, serve as a signal peptide directing secretion; sequence MNTKTVKSMAGIVLSQISLVALFPLCIC. 4 disulfide bridges follow: C50/C130, C83/C88, C136/C337, and C215/C247. The active-site Proton acceptor is H81. Ca(2+)-binding residues include D82, V85, G87, D89, and S91. P178 serves as a coordination point for substrate. H208 is a heme b binding site. Ca(2+) is bound at residue T209. Residue N224 is glycosylated (N-linked (GlcNAc...) asparagine). Ca(2+) is bound by residues D260, T263, and D268.

The protein belongs to the peroxidase family. Classical plant (class III) peroxidase subfamily. Requires heme b as cofactor. Ca(2+) is required as a cofactor.

It is found in the secreted. It catalyses the reaction 2 a phenolic donor + H2O2 = 2 a phenolic radical donor + 2 H2O. Removal of H(2)O(2), oxidation of toxic reductants, biosynthesis and degradation of lignin, suberization, auxin catabolism, response to environmental stresses such as wounding, pathogen attack and oxidative stress. These functions might be dependent on each isozyme/isoform in each plant tissue. The polypeptide is Peroxidase 36 (PER36) (Arabidopsis thaliana (Mouse-ear cress)).